The chain runs to 210 residues: Endonuclease III (210 aa).

The region spanning 108-127 (FKALIKLPGVGRKTANVVLN) is the HhH domain. [4Fe-4S] cluster is bound by residues Cys-187, Cys-194, Cys-197, and Cys-203.

This sequence belongs to the Nth/MutY family. The cofactor is [4Fe-4S] cluster.

The enzyme catalyses 2'-deoxyribonucleotide-(2'-deoxyribose 5'-phosphate)-2'-deoxyribonucleotide-DNA = a 3'-end 2'-deoxyribonucleotide-(2,3-dehydro-2,3-deoxyribose 5'-phosphate)-DNA + a 5'-end 5'-phospho-2'-deoxyribonucleoside-DNA + H(+). Functionally, DNA repair enzyme that has both DNA N-glycosylase activity and AP-lyase activity. The DNA N-glycosylase activity releases various damaged pyrimidines from DNA by cleaving the N-glycosidic bond, leaving an AP (apurinic/apyrimidinic) site. The AP-lyase activity cleaves the phosphodiester bond 3' to the AP site by a beta-elimination, leaving a 3'-terminal unsaturated sugar and a product with a terminal 5'-phosphate. This Rickettsia conorii (strain ATCC VR-613 / Malish 7) protein is Endonuclease III.